The following is a 239-amino-acid chain: Pyridoxine 5'-phosphate synthase (239 aa).

Asn-7 contacts 3-amino-2-oxopropyl phosphate. 1-deoxy-D-xylulose 5-phosphate is bound at residue 9 to 10 (DH). Residue Arg-18 coordinates 3-amino-2-oxopropyl phosphate. His-43 serves as the catalytic Proton acceptor. 1-deoxy-D-xylulose 5-phosphate contacts are provided by Arg-45 and His-50. Catalysis depends on Glu-70, which acts as the Proton acceptor. Thr-100 contacts 1-deoxy-D-xylulose 5-phosphate. His-191 (proton donor) is an active-site residue. 3-amino-2-oxopropyl phosphate is bound by residues Gly-192 and 213 to 214 (GH).

The protein belongs to the PNP synthase family. As to quaternary structure, homooctamer; tetramer of dimers.

The protein localises to the cytoplasm. The enzyme catalyses 3-amino-2-oxopropyl phosphate + 1-deoxy-D-xylulose 5-phosphate = pyridoxine 5'-phosphate + phosphate + 2 H2O + H(+). The protein operates within cofactor biosynthesis; pyridoxine 5'-phosphate biosynthesis; pyridoxine 5'-phosphate from D-erythrose 4-phosphate: step 5/5. Its function is as follows. Catalyzes the complicated ring closure reaction between the two acyclic compounds 1-deoxy-D-xylulose-5-phosphate (DXP) and 3-amino-2-oxopropyl phosphate (1-amino-acetone-3-phosphate or AAP) to form pyridoxine 5'-phosphate (PNP) and inorganic phosphate. In Syntrophotalea carbinolica (strain DSM 2380 / NBRC 103641 / GraBd1) (Pelobacter carbinolicus), this protein is Pyridoxine 5'-phosphate synthase.